Here is a 456-residue protein sequence, read N- to C-terminus: MGQTLFDKVWKKHVLHGKEGEPQLLYIDLHLIHEVTSPQAFEGLRIQNRKLRRPDLTFATLDHNVPTIDIFNIKDEIANKQITTLQQNAKDFGVHIFDMGSDEQGIVHMVGPETGLTQPGKTIVCGDSHTATHGAFGAIAFGIGTSEVEHVFATQTLWQTKPKNLKININGSLPAGVYAKDIILYLINQYGVDFGTGYALEFTGETIKNLSMEARMTICNMAIEAGAKYGLMQPDETTFNYVKGRPYATDFDSSMAWWKELYSDDDAYFDKVIELDVTNLEPQVTWGTNPEMGVSFSNPFPEIKNANDQRAYDYMGLHPGQKAEDIKLGYVFLGSCTNARLSDLIEASHIIKGQQVHPNITAIVVPGSRTVKKEAEALGLDKLFKDAGFEWREPGCSMCLGMNPDQVPEGVHCASTSNRNFEGRQGKGARTHLVSPVMAAAAAINGKFIDVRKVVV.

[4Fe-4S] cluster-binding residues include Cys336, Cys396, and Cys399.

It belongs to the aconitase/IPM isomerase family. LeuC type 1 subfamily. Heterodimer of LeuC and LeuD. Requires [4Fe-4S] cluster as cofactor.

It carries out the reaction (2R,3S)-3-isopropylmalate = (2S)-2-isopropylmalate. The protein operates within amino-acid biosynthesis; L-leucine biosynthesis; L-leucine from 3-methyl-2-oxobutanoate: step 2/4. In terms of biological role, catalyzes the isomerization between 2-isopropylmalate and 3-isopropylmalate, via the formation of 2-isopropylmaleate. The sequence is that of 3-isopropylmalate dehydratase large subunit from Staphylococcus epidermidis (strain ATCC 12228 / FDA PCI 1200).